We begin with the raw amino-acid sequence, 98 residues long: Cytochrome b (98 aa).

3 consecutive transmembrane segments (helical) span residues 1–18 (LLGL…FLAM), 42–63 (WLIR…YLHV), and 78–98 (WNIG…GYVL). Heme b contacts are provided by H48 and H62.

It belongs to the cytochrome b family. The cytochrome bc1 complex contains 3 respiratory subunits (MT-CYB, CYC1 and UQCRFS1), 2 core proteins (UQCRC1 and UQCRC2) and probably 6 low-molecular weight proteins. Requires heme b as cofactor.

It localises to the mitochondrion inner membrane. Its function is as follows. Component of the ubiquinol-cytochrome c reductase complex (complex III or cytochrome b-c1 complex) that is part of the mitochondrial respiratory chain. The b-c1 complex mediates electron transfer from ubiquinol to cytochrome c. Contributes to the generation of a proton gradient across the mitochondrial membrane that is then used for ATP synthesis. This is Cytochrome b (mt-cyb) from Scaphirhynchus platorynchus (Shovelnose sturgeon).